The primary structure comprises 396 residues: Chorismate synthase (396 aa).

Residues Arg41 and Arg47 each coordinate NADP(+). FMN is bound by residues 130-132 (RAS), Gly298, 313-317 (KPIPT), and Arg339.

It belongs to the chorismate synthase family. Homotetramer. The cofactor is FMNH2.

It carries out the reaction 5-O-(1-carboxyvinyl)-3-phosphoshikimate = chorismate + phosphate. Its pathway is metabolic intermediate biosynthesis; chorismate biosynthesis; chorismate from D-erythrose 4-phosphate and phosphoenolpyruvate: step 7/7. Catalyzes the anti-1,4-elimination of the C-3 phosphate and the C-6 proR hydrogen from 5-enolpyruvylshikimate-3-phosphate (EPSP) to yield chorismate, which is the branch point compound that serves as the starting substrate for the three terminal pathways of aromatic amino acid biosynthesis. This reaction introduces a second double bond into the aromatic ring system. This is Chorismate synthase from Syntrophomonas wolfei subsp. wolfei (strain DSM 2245B / Goettingen).